A 1022-amino-acid polypeptide reads, in one-letter code: Protein translocase subunit SECA1, chloroplastic (1022 aa).

Residues 1–72 constitute a chloroplast transit peptide; sequence MVSPLCDSQL…SRKRSTSVNA (72 aa). N-acetylserine is present on Ser73. 176 to 183 contacts ATP; the sequence is MRTGEGKT. Positions 985-1022 are disordered; that stretch reads KDEEKKSQNGKPSKQVDNASEKPKQVGVTDEPSSIASA. The span at 993–1002 shows a compositional bias: polar residues; the sequence is NGKPSKQVDN.

It belongs to the SecA family. In terms of assembly, part of the Sec protein translocation apparatus. Interacts probably with SCY1. In terms of tissue distribution, expressed in green tissues, including cotyledons, rosette and cauline leaves, and sepals. Also detected at the base and the tip of the trichome.

The protein localises to the plastid. Its subcellular location is the chloroplast stroma. It is found in the chloroplast thylakoid membrane. The catalysed reaction is ATP + H2O + chloroplast-proteinSide 1 = ADP + phosphate + chloroplast-proteinSide 2.. Has a central role in coupling the hydrolysis of ATP to the transfer of proteins across the thylakoid membrane. Involved in photosynthetic acclimation and required for chloroplast biogenesis. This Arabidopsis thaliana (Mouse-ear cress) protein is Protein translocase subunit SECA1, chloroplastic.